The chain runs to 134 residues: UPF0102 protein Rmet_3430 (134 aa).

The protein belongs to the UPF0102 family.

The chain is UPF0102 protein Rmet_3430 from Cupriavidus metallidurans (strain ATCC 43123 / DSM 2839 / NBRC 102507 / CH34) (Ralstonia metallidurans).